The sequence spans 301 residues: tRNA dimethylallyltransferase 1 (301 aa).

11–18 provides a ligand contact to ATP; the sequence is GPTGVGKT. A substrate-binding site is contributed by 13–18; that stretch reads TGVGKT. The interaction with substrate tRNA stretch occupies residues 36–39; sequence DSRQ.

It belongs to the IPP transferase family. In terms of assembly, monomer. Mg(2+) is required as a cofactor.

The catalysed reaction is adenosine(37) in tRNA + dimethylallyl diphosphate = N(6)-dimethylallyladenosine(37) in tRNA + diphosphate. Catalyzes the transfer of a dimethylallyl group onto the adenine at position 37 in tRNAs that read codons beginning with uridine, leading to the formation of N6-(dimethylallyl)adenosine (i(6)A). This chain is tRNA dimethylallyltransferase 1, found in Bacteroides fragilis (strain YCH46).